Here is a 534-residue protein sequence, read N- to C-terminus: Peptide chain release factor 3 (534 aa).

The region spanning 9–278 (ARRRTFAIIS…FFIEHAPPPQ (270 aa)) is the tr-type G domain. Residues 18–25 (SHPDAGKT), 86–90 (DTPGH), and 140–143 (NKLD) contribute to the GTP site.

It belongs to the TRAFAC class translation factor GTPase superfamily. Classic translation factor GTPase family. PrfC subfamily.

The protein localises to the cytoplasm. Its function is as follows. Increases the formation of ribosomal termination complexes and stimulates activities of RF-1 and RF-2. It binds guanine nucleotides and has strong preference for UGA stop codons. It may interact directly with the ribosome. The stimulation of RF-1 and RF-2 is significantly reduced by GTP and GDP, but not by GMP. The chain is Peptide chain release factor 3 from Xanthomonas oryzae pv. oryzae (strain PXO99A).